Consider the following 186-residue polypeptide: Tumor necrosis factor alpha-induced protein 8-like protein 1 (186 aa).

This sequence belongs to the TNFAIP8 family. In terms of assembly, interacts with FBXW5; TNFAIP8L1 competes with TSC2 to bind FBXW5 increasing TSC2 stability by preventing its ubiquitination. In terms of tissue distribution, detected in wide variety tissues, such as neurons in brain, hepatocytes, germ cells of female and male reproductive organs, muscular tissues and variety types of cells of the epithelial origin (at protein level).

It localises to the cytoplasm. In terms of biological role, acts as a negative regulator of mTOR activity. In Mus musculus (Mouse), this protein is Tumor necrosis factor alpha-induced protein 8-like protein 1 (Tnfaip8l1).